The following is a 625-amino-acid chain: Probable receptor-like protein kinase At1g11050 (625 aa).

The N-terminal stretch at 1–20 is a signal peptide; that stretch reads MPNSILFLLLSFLYLTNCVA. Residues 21 to 227 are Extracellular-facing; the sequence is QSPSQTCPLD…PLNSKKKRHT (207 aa). N-linked (GlcNAc...) asparagine glycans are attached at residues asparagine 40, asparagine 106, asparagine 121, and asparagine 177. A helical membrane pass occupies residues 228–248; sequence VALALGITGAIFGALVIAGLI. Topologically, residues 249-625 are cytoplasmic; it reads CLYFRFGKAV…LQIHSGDMLR (377 aa). The 261-residue stretch at 295–555 folds into the Protein kinase domain; that stretch reads FSQKNFIGRG…NPKGIMERFL (261 aa). ATP is bound by residues 301–309 and lysine 323; that span reads IGRGGFGFV. Aspartate 426 functions as the Proton acceptor in the catalytic mechanism.

Belongs to the protein kinase superfamily. Ser/Thr protein kinase family.

Its subcellular location is the membrane. It carries out the reaction L-seryl-[protein] + ATP = O-phospho-L-seryl-[protein] + ADP + H(+). The enzyme catalyses L-threonyl-[protein] + ATP = O-phospho-L-threonyl-[protein] + ADP + H(+). In Arabidopsis thaliana (Mouse-ear cress), this protein is Probable receptor-like protein kinase At1g11050.